Consider the following 622-residue polypeptide: Phosphomethylpyrimidine synthase (622 aa).

The disordered stretch occupies residues 109-130; that stretch reads EPISNNNNDRQSSDKQLSFTTN. Substrate is bound by residues asparagine 234, methionine 263, tyrosine 292, histidine 328, 348–350, 389–392, and glutamate 428; these read SRG and DGLR. Histidine 432 is a binding site for Zn(2+). Tyrosine 455 is a binding site for substrate. Histidine 496 contributes to the Zn(2+) binding site. 3 residues coordinate [4Fe-4S] cluster: cysteine 576, cysteine 579, and cysteine 584.

This sequence belongs to the ThiC family. As to quaternary structure, homodimer. [4Fe-4S] cluster serves as cofactor.

It catalyses the reaction 5-amino-1-(5-phospho-beta-D-ribosyl)imidazole + S-adenosyl-L-methionine = 4-amino-2-methyl-5-(phosphooxymethyl)pyrimidine + CO + 5'-deoxyadenosine + formate + L-methionine + 3 H(+). It functions in the pathway cofactor biosynthesis; thiamine diphosphate biosynthesis. Functionally, catalyzes the synthesis of the hydroxymethylpyrimidine phosphate (HMP-P) moiety of thiamine from aminoimidazole ribotide (AIR) in a radical S-adenosyl-L-methionine (SAM)-dependent reaction. This is Phosphomethylpyrimidine synthase from Baumannia cicadellinicola subsp. Homalodisca coagulata.